Reading from the N-terminus, the 259-residue chain is ATP synthase subunit a (259 aa).

A propeptide spans 1-10 (MFNLLNTYIT) (removed in mature form). The next 6 membrane-spanning stretches (helical) occupy residues 36-56 (LTTF…LYTL), 92-112 (WGLY…ANLI), 125-145 (LVFI…LGLY), 150-170 (VFFS…LLVI), 191-211 (ILAG…FMLI), and 216-236 (LVFG…EFAI).

This sequence belongs to the ATPase A chain family. As to quaternary structure, F-type ATPases have 2 components, CF(1) - the catalytic core - and CF(0) - the membrane proton channel. In yeast, the dimeric form of ATP synthase consists of 17 polypeptides: alpha, beta, gamma, delta, epsilon, 4 (B), 5 (OSCP), 6 (A), 8, 9 (C), d, E (Tim11), f, g, h, i/j and k.

Its subcellular location is the mitochondrion inner membrane. Functionally, mitochondrial membrane ATP synthase (F(1)F(0) ATP synthase or Complex V) produces ATP from ADP in the presence of a proton gradient across the membrane which is generated by electron transport complexes of the respiratory chain. F-type ATPases consist of two structural domains, F(1) - containing the extramembraneous catalytic core and F(0) - containing the membrane proton channel, linked together by a central stalk and a peripheral stalk. During catalysis, ATP synthesis in the catalytic domain of F(1) is coupled via a rotary mechanism of the central stalk subunits to proton translocation. Key component of the proton channel; it may play a direct role in the translocation of protons across the membrane. In Saccharomyces cerevisiae (strain ATCC 204508 / S288c) (Baker's yeast), this protein is ATP synthase subunit a (ATP6).